Consider the following 436-residue polypeptide: Antilisterial bacteriocin subtilosin biosynthesis protein AlbD (436 aa).

Transmembrane regions (helical) follow at residues 27–47 (IAAGLVILAVFEIGLIRQAGI), 51–71 (VLGKTYIILALLLMNTYMVFL), 112–132 (TLFFFILPLFLFGNGTLSGAQ), 134–154 (LFWLGRFSFFTVYSILFGVML), 166–186 (FLLHAAVFAFVCLSAAFMPAV), 187–207 (TIPLCAVHMLWAVIIDFPVFL), 240–260 (AMLLNYVVMAAFSGFFSFQMM), 270–290 (IYIVISALLLICSPIALLYSI), 315–335 (FYSGLLAGGFLLVAIIVGFIS), and 395–415 (ATLAGTAVSLAVIPIAALIIV).

It is found in the cell membrane. Functionally, involved in the production of the bacteriocin subtilosin. Required for immunity to subtilosin. This Bacillus subtilis protein is Antilisterial bacteriocin subtilosin biosynthesis protein AlbD (albD).